Consider the following 759-residue polypeptide: Polyribonucleotide nucleotidyltransferase (759 aa).

Positions 522 and 528 each coordinate Mg(2+). The 60-residue stretch at 588–647 (PRITTIKVPVDKIGEVIGPKGKMINSITEETGASISIEDDGTVFVGASNGEAAQAAIDKI) folds into the KH domain. In terms of domain architecture, S1 motif spans 659–728 (GERFLGTVVK…NRGKISLVLV (70 aa)). The interval 734-759 (AEASDNGSATPSDKAPATADATTAGN) is disordered. A compositionally biased stretch (low complexity) spans 741 to 759 (SATPSDKAPATADATTAGN).

Belongs to the polyribonucleotide nucleotidyltransferase family. The cofactor is Mg(2+).

Its subcellular location is the cytoplasm. The enzyme catalyses RNA(n+1) + phosphate = RNA(n) + a ribonucleoside 5'-diphosphate. Involved in mRNA degradation. Catalyzes the phosphorolysis of single-stranded polyribonucleotides processively in the 3'- to 5'-direction. This chain is Polyribonucleotide nucleotidyltransferase, found in Mycobacterium sp. (strain JLS).